The chain runs to 162 residues: Interleukin-15 (162 aa).

Positions 1-29 (MRISKPHLRSVSIQCYLCLLLNSHFLTEA) are cleaved as a signal peptide. The propeptide occupies 30–48 (GIHVFILGCFSAGLPKTEA). 2 cysteine pairs are disulfide-bonded: Cys83-Cys133 and Cys90-Cys136. Residue Asn127 is glycosylated (N-linked (GlcNAc...) asparagine).

The protein belongs to the IL-15/IL-21 family.

Its subcellular location is the secreted. In terms of biological role, cytokine that plays a major role in the development of inflammatory and protective immune responses to microbial invaders and parasites by modulating immune cells of both the innate and adaptive immune systems. Stimulates the proliferation of natural killer cells, T-cells and B-cells and promotes the secretion of several cytokines. In monocytes, induces the production of IL8 and monocyte chemotactic protein 1/CCL2, two chemokines that attract neutrophils and monocytes respectively to sites of infection. Unlike most cytokines, which are secreted in soluble form, IL15 is expressed in association with its high affinity IL15RA on the surface of IL15-producing cells and delivers signals to target cells that express IL2RB and IL2RG receptor subunits. Binding to its receptor triggers the phosphorylation of JAK1 and JAK3 and the recruitment and subsequent phosphorylation of signal transducer and activator of transcription-3/STAT3 and STAT5. In mast cells, induces the rapid tyrosine phosphorylation of STAT6 and thereby controls mast cell survival and release of cytokines such as IL4. This chain is Interleukin-15 (IL15), found in Macaca mulatta (Rhesus macaque).